The following is a 392-amino-acid chain: tRNA (guanine(6)-N2)-methyltransferase (392 aa).

Positions 73 to 183 (SAIPLLNHFS…DSELFVGVDT (111 aa)) constitute a THUMP domain. S-adenosyl-L-methionine is bound by residues 199–203 (HPAHL), 230–232 (SGT), glutamate 275, 303–304 (DA), and asparagine 317.

The protein belongs to the methyltransferase superfamily.

It is found in the cytoplasm. It carries out the reaction guanosine(6) in tRNA + S-adenosyl-L-methionine = N(2)-methylguanosine(6) in tRNA + S-adenosyl-L-homocysteine + H(+). S-adenosyl-L-methionine-dependent methyltransferase that catalyzes the methylation of the guanosine nucleotide at position 6 (m2G6) in tRNA. This Archaeoglobus fulgidus (strain ATCC 49558 / DSM 4304 / JCM 9628 / NBRC 100126 / VC-16) protein is tRNA (guanine(6)-N2)-methyltransferase.